Here is a 520-residue protein sequence, read N- to C-terminus: Putative lipase ATG15 (520 aa).

The Cytoplasmic portion of the chain corresponds to 1–14; that stretch reads MLHKSPSRKRFASP. Residues 15 to 35 traverse the membrane as a helical; Signal-anchor for type II membrane protein segment; that stretch reads LHLGCILTLTVLCLIAYYFAL. Residues 36–520 are Lumenal-facing; sequence PDYLSVGKSS…WLGFCTKYEL (485 aa). Asn-173, Asn-202, and Asn-208 each carry an N-linked (GlcNAc...) asparagine glycan. Ser-332 acts as the Charge relay system in catalysis.

Belongs to the AB hydrolase superfamily. Lipase family. In terms of assembly, binds to both phosphatidylinositol (PI) and phosphatidylinositol 3,5-bisphosphate (PIP2). In terms of processing, glycosylated.

The protein resides in the endosome. The protein localises to the multivesicular body membrane. It localises to the prevacuolar compartment membrane. The catalysed reaction is a triacylglycerol + H2O = a diacylglycerol + a fatty acid + H(+). Lipase which is essential for lysis of subvacuolar cytoplasm to vacuole targeted bodies and intravacuolar autophagic bodies. Involved in the lysis of intravacuolar multivesicular body (MVB) vesicles. The intravacuolar membrane disintegration by ATG15 is critical to life span extension. This Saccharomyces cerevisiae (strain ATCC 204508 / S288c) (Baker's yeast) protein is Putative lipase ATG15 (ATG15).